Here is a 550-residue protein sequence, read N- to C-terminus: Spermatogenesis-associated protein 2 (550 aa).

The 74-residue stretch at 83–156 (TVGTAFATLE…YNVRDHPGGA (74 aa)) folds into the PUB domain. Positions 320 to 337 (YHLSSLDEVDLYTERGLG) match the PIM motif motif. Residues 457–480 (SKPVGSGPSPVGSLVSSGSSSSGG) are disordered.

This sequence belongs to the SPATA2 family.

Its subcellular location is the cytoplasm. It is found in the nucleus. Functionally, bridging factor that mediates the recruitment of cyld to the LUBAC complex, thereby regulating TNF-alpha-induced necroptosis. Required to activate the 'Met-1'- (linear) and 'Lys-63'-linked deubiquitinase activities of cyld. The sequence is that of Spermatogenesis-associated protein 2 from Danio rerio (Zebrafish).